A 368-amino-acid polypeptide reads, in one-letter code: 3-dehydroquinate synthase (368 aa).

NAD(+) is bound by residues 71–76 (DGEAFK), 105–109 (GVVGD), 129–130 (TT), lysine 142, lysine 151, and 169–172 (TLRT). Glutamate 184, histidine 247, and histidine 264 together coordinate Zn(2+).

The protein belongs to the sugar phosphate cyclases superfamily. Dehydroquinate synthase family. Requires Co(2+) as cofactor. Zn(2+) is required as a cofactor. NAD(+) serves as cofactor.

The protein resides in the cytoplasm. The catalysed reaction is 7-phospho-2-dehydro-3-deoxy-D-arabino-heptonate = 3-dehydroquinate + phosphate. Its pathway is metabolic intermediate biosynthesis; chorismate biosynthesis; chorismate from D-erythrose 4-phosphate and phosphoenolpyruvate: step 2/7. In terms of biological role, catalyzes the conversion of 3-deoxy-D-arabino-heptulosonate 7-phosphate (DAHP) to dehydroquinate (DHQ). The protein is 3-dehydroquinate synthase of Cupriavidus pinatubonensis (strain JMP 134 / LMG 1197) (Cupriavidus necator (strain JMP 134)).